A 185-amino-acid chain; its full sequence is Elongation factor P (185 aa).

This sequence belongs to the elongation factor P family.

The protein resides in the cytoplasm. It functions in the pathway protein biosynthesis; polypeptide chain elongation. Involved in peptide bond synthesis. Stimulates efficient translation and peptide-bond synthesis on native or reconstituted 70S ribosomes in vitro. Probably functions indirectly by altering the affinity of the ribosome for aminoacyl-tRNA, thus increasing their reactivity as acceptors for peptidyl transferase. In Staphylococcus epidermidis (strain ATCC 35984 / DSM 28319 / BCRC 17069 / CCUG 31568 / BM 3577 / RP62A), this protein is Elongation factor P.